We begin with the raw amino-acid sequence, 638 residues long: CTTNBP2 N-terminal-like protein (638 aa).

Residues 87–284 (MKQCKNMQER…KDLEAAQQHR (198 aa)) are a coiled coil. 4 disordered regions span residues 280–303 (AQQH…TATE), 360–430 (RELT…PCSS), 463–490 (RHKF…LSPT), and 514–621 (NQGP…CSPS). Ser285 is modified (phosphoserine). The span at 360-371 (RELTSDSSTENQ) shows a compositional bias: polar residues. Low complexity-rich tracts occupy residues 401–430 (TMPS…PCSS) and 467–477 (QSQADQDQQAS). 7 positions are modified to phosphoserine: Ser481, Ser488, Ser522, Ser526, Ser559, Ser562, and Ser567. Over residues 514-528 (NQGPIKPVSPNSSPF) the composition is skewed to polar residues. 2 positions are modified to phosphothreonine: Thr569 and Thr589. Polar residues predominate over residues 589–620 (TPSQSATTPVTKTHSQASSLAATEDLASSCSP). At Ser591 the chain carries Phosphoserine.

As to quaternary structure, interacts with CTTN/cortactin; this interaction may redistribute CTTN to stress fibers. May form homomers. Associates with the core of STRIPAK complexes composed of PP2A catalytic and scaffolding subunits, the striatins (PP2A regulatory subunits), the striatin-associated proteins MOB4, STRIP1 and STRIP2, PDCD10 and members of the STE20 kinases, such as STK24 and STK26. In terms of tissue distribution, predominantly expressed in skin, also detectable in spleen and lung (at protein level). Very low levels, if any, in brain (at protein level).

The protein localises to the cell projection. The protein resides in the lamellipodium. It localises to the cytoplasm. It is found in the cytoskeleton. Its subcellular location is the stress fiber. Functionally, regulates lamellipodial actin dynamics in a CTTN-dependent manner. Associates with core striatin-interacting phosphatase and kinase (STRIPAK) complex to form CTTNBP2NL-STRIPAK complexes. STRIPAK complexes have critical roles in protein (de)phosphorylation and are regulators of multiple signaling pathways including Hippo, MAPK, nuclear receptor and cytoskeleton remodeling. Different types of STRIPAK complexes are involved in a variety of biological processes such as cell growth, differentiation, apoptosis, metabolism and immune regulation. The chain is CTTNBP2 N-terminal-like protein (Cttnbp2nl) from Mus musculus (Mouse).